We begin with the raw amino-acid sequence, 404 residues long: Cysteine desulfurase IscS (404 aa).

Pyridoxal 5'-phosphate-binding positions include 75-76, Asn155, Gln183, and 203-205; these read AT and SAH. Lys206 carries the post-translational modification N6-(pyridoxal phosphate)lysine. Position 243 (Thr243) interacts with pyridoxal 5'-phosphate. The active-site Cysteine persulfide intermediate is the Cys328. Cys328 contacts [2Fe-2S] cluster.

It belongs to the class-V pyridoxal-phosphate-dependent aminotransferase family. NifS/IscS subfamily. As to quaternary structure, homodimer. Forms a heterotetramer with IscU, interacts with other sulfur acceptors. It depends on pyridoxal 5'-phosphate as a cofactor.

It localises to the cytoplasm. It carries out the reaction (sulfur carrier)-H + L-cysteine = (sulfur carrier)-SH + L-alanine. Its pathway is cofactor biosynthesis; iron-sulfur cluster biosynthesis. In terms of biological role, master enzyme that delivers sulfur to a number of partners involved in Fe-S cluster assembly, tRNA modification or cofactor biosynthesis. Catalyzes the removal of elemental sulfur atoms from cysteine to produce alanine. Functions as a sulfur delivery protein for Fe-S cluster synthesis onto IscU, an Fe-S scaffold assembly protein, as well as other S acceptor proteins. The chain is Cysteine desulfurase IscS from Aeromonas hydrophila subsp. hydrophila (strain ATCC 7966 / DSM 30187 / BCRC 13018 / CCUG 14551 / JCM 1027 / KCTC 2358 / NCIMB 9240 / NCTC 8049).